Consider the following 572-residue polypeptide: FAD-linked oxidoreductase patO (572 aa).

Residues 1–23 (MRLSIYSSILLLRAMCLVRPTFG) form the signal peptide. N-linked (GlcNAc...) asparagine glycosylation is found at asparagine 48, asparagine 71, asparagine 126, asparagine 180, asparagine 309, asparagine 354, asparagine 381, asparagine 422, asparagine 446, and asparagine 481. The FAD-binding PCMH-type domain maps to 115–295 (CAPGDMVVYS…YSMTVKAFPD (181 aa)).

Belongs to the oxygen-dependent FAD-linked oxidoreductase family. FAD is required as a cofactor.

The protein localises to the vacuole lumen. It participates in mycotoxin biosynthesis; patulin biosynthesis. In terms of biological role, FAD-linked oxidoreductase; part of the gene cluster that mediates the biosynthesis of patulin, an acetate-derived tetraketide mycotoxin produced by several fungal species that shows antimicrobial properties against several bacteria. PatO acts with patJ in the vacuole to convert gentisyl alcohol to isoepoxydon. The pathway begins with the synthesis of 6-methylsalicylic acid by the polyketide synthase (PKS) patK via condensation of acetate and malonate units. The 6-methylsalicylic acid decarboxylase patG then catalyzes the decarboxylation of 6-methylsalicylic acid to yield m-cresol (also known as 3-methylphenol). These first reactions occur in the cytosol. The intermediate m-cresol is then transported into the endoplasmic reticulum where the cytochrome P450 monooxygenase patH converts it to m-hydroxybenzyl alcohol, which is further converted to gentisyl alcohol by the cytochrome P450 monooxygenase patI. The oxidoreductases patJ and patO further convert gentisyl alcohol to isoepoxydon in the vacuole. PatN catalyzes then the transformation of isoepoxydon into phyllostine. The cluster protein patF is responsible for the conversion from phyllostine to neopatulin whereas the alcohol dehydrogenase patD converts neopatulin to E-ascladiol. The steps between isoepoxydon and E-ascladiol occur in the cytosol, and E-ascladiol is probably secreted to the extracellular space by one of the cluster-specific transporters patC or patM. Finally, the secreted patulin synthase patE catalyzes the conversion of E-ascladiol to patulin. The protein is FAD-linked oxidoreductase patO of Aspergillus clavatus (strain ATCC 1007 / CBS 513.65 / DSM 816 / NCTC 3887 / NRRL 1 / QM 1276 / 107).